A 438-amino-acid chain; its full sequence is 23S rRNA (uracil(1939)-C(5))-methyltransferase RlmD (438 aa).

Residues 4-68 (FYTPGRRTAT…RHFARGRVTR (65 aa)) enclose the TRAM domain. Residues Cys81, Cys87, Cys90, and Cys167 each coordinate [4Fe-4S] cluster. Residues Gln269, Phe298, Asn303, Glu319, Asn346, and Asp367 each contribute to the S-adenosyl-L-methionine site. The Nucleophile role is filled by Cys393.

Belongs to the class I-like SAM-binding methyltransferase superfamily. RNA M5U methyltransferase family. RlmD subfamily.

The catalysed reaction is uridine(1939) in 23S rRNA + S-adenosyl-L-methionine = 5-methyluridine(1939) in 23S rRNA + S-adenosyl-L-homocysteine + H(+). Catalyzes the formation of 5-methyl-uridine at position 1939 (m5U1939) in 23S rRNA. The chain is 23S rRNA (uracil(1939)-C(5))-methyltransferase RlmD from Edwardsiella ictaluri (strain 93-146).